Reading from the N-terminus, the 249-residue chain is ATP synthase subunit a (249 aa).

6 consecutive transmembrane segments (helical) span residues 30-50 (QSPL…YVGM), 86-106 (FFPF…LGLL), 115-135 (HIAV…LASI), 146-166 (FLPA…EIIS), 191-211 (VFAG…VLAI), and 218-238 (IALT…FAIL).

The protein belongs to the ATPase A chain family. In terms of assembly, F-type ATPases have 2 components, CF(1) - the catalytic core - and CF(0) - the membrane proton channel. CF(1) has five subunits: alpha(3), beta(3), gamma(1), delta(1), epsilon(1). CF(0) has three main subunits: a(1), b(2) and c(9-12). The alpha and beta chains form an alternating ring which encloses part of the gamma chain. CF(1) is attached to CF(0) by a central stalk formed by the gamma and epsilon chains, while a peripheral stalk is formed by the delta and b chains.

Its subcellular location is the cell inner membrane. In terms of biological role, key component of the proton channel; it plays a direct role in the translocation of protons across the membrane. The polypeptide is ATP synthase subunit a (Gluconobacter oxydans (strain 621H) (Gluconobacter suboxydans)).